The chain runs to 83 residues: Hepcidin (83 aa).

A signal peptide spans 1-23 (MALSTRTQAACLLLLLLASLSST). The propeptide occupies 24-53 (TYLHQQMRQTTELQPLHGEESRADIAIPMQ). Disulfide bonds link C65-C81, C68-C71, C69-C77, and C72-C80.

It belongs to the hepcidin family. In terms of assembly, interacts with SLC40A1; this interaction promotes SLC40A1 rapid ubiquitination. Highly expressed in the liver and to a much lesser extent in the heart. Secreted in blood.

It is found in the secreted. Liver-produced hormone that constitutes the main circulating regulator of iron absorption and distribution across tissues. Acts by promoting endocytosis and degradation of SLC40A1, leading to the retention of iron in iron-exporting cells and decreased flow of iron into plasma. Controls the major flows of iron into plasma: absorption of dietary iron in the intestine, recycling of iron by macrophages, which phagocytose old erythrocytes and other cells, and mobilization of stored iron from hepatocytes. The polypeptide is Hepcidin (Hamp) (Mus musculus (Mouse)).